The primary structure comprises 107 residues: MTWTYILRQSDLPPGEMQRYEGGPEPVMVCNVDGDFFAVQDTCTHGDWALSDGYLDGDIVECTLHFGKFCVRTGKVKALPACKPIKVFPIKVEGDEVHVDLDNGELK.

The region spanning 4–99 (TYILRQSDLP…IKVEGDEVHV (96 aa)) is the Rieske domain. [2Fe-2S] cluster contacts are provided by cysteine 43, histidine 45, cysteine 62, and histidine 65.

This sequence belongs to the bacterial ring-hydroxylating dioxygenase ferredoxin component family. In terms of assembly, this dioxygenase system consists of four proteins: the two subunits of the hydroxylase component (BnzA and BnzB), a ferredoxin (BnzC) and a ferredoxin reductase (BnzD).

Its pathway is aromatic compound metabolism; benzene degradation; catechol from benzene: step 1/2. Functionally, this protein seems to be a 2Fe-2S ferredoxin. The chain is Benzene 1,2-dioxygenase system ferredoxin subunit (bnzC) from Pseudomonas putida (Arthrobacter siderocapsulatus).